The sequence spans 664 residues: DNA ligase (664 aa).

Residues 32-36 and 80-81 contribute to the NAD(+) site; these read DKEYD and SL. Residue Lys122 is the N6-AMP-lysine intermediate of the active site. NAD(+)-binding residues include Arg144, Glu178, and Lys314. Residues Cys407, Cys410, Cys423, and Cys429 each coordinate Zn(2+). The region spanning 587–664 is the BRCT domain; that stretch reads IDENPFMDKT…NEEEFSNKIK (78 aa).

It belongs to the NAD-dependent DNA ligase family. LigA subfamily. It depends on Mg(2+) as a cofactor. Requires Mn(2+) as cofactor.

The catalysed reaction is NAD(+) + (deoxyribonucleotide)n-3'-hydroxyl + 5'-phospho-(deoxyribonucleotide)m = (deoxyribonucleotide)n+m + AMP + beta-nicotinamide D-nucleotide.. Functionally, DNA ligase that catalyzes the formation of phosphodiester linkages between 5'-phosphoryl and 3'-hydroxyl groups in double-stranded DNA using NAD as a coenzyme and as the energy source for the reaction. It is essential for DNA replication and repair of damaged DNA. The polypeptide is DNA ligase (Clostridium botulinum (strain Loch Maree / Type A3)).